A 478-amino-acid polypeptide reads, in one-letter code: Sodium-coupled neutral amino acid transporter 5 (478 aa).

The tract at residues 1–20 (MAISSAEGMELQDPKMNGAL) is disordered. The Cytoplasmic portion of the chain corresponds to 1-57 (MAISSAEGMELQDPKMNGALPGNAVEQEHEGFLPSHSPSPGRKPAQFMDFEGKTSFG). The chain crosses the membrane as a helical span at residues 58–80 (MSVFNLSNAIMGSGILGLAYAMA). Over 81–93 (HTGILLFLALLLC) the chain is Extracellular. The helical transmembrane segment at 94 to 114 (IALLSSYSIHLLLTCAGVVGI) threads the bilayer. Residues 115–131 (RAYEQLGQRALGPAGKV) are Cytoplasmic-facing. Residues 132 to 152 (VVAAVICLHNVGAMSSYLFII) traverse the membrane as a helical segment. At 153–172 (KSELPLVIATFLDMDPEGDW) the chain is on the extracellular side. A helical transmembrane segment spans residues 173–193 (FLKGNLLIIIVSVLIILPLAL). Residues 194 to 198 (MRHLG) lie on the Cytoplasmic side of the membrane. A helical membrane pass occupies residues 199–219 (YLGYTSGLSLTCMLFFLISVI). Topologically, residues 220-263 (YKKFQLGCTVGHNGTAVESKSSPSLPIHGLNTSCEAQMFTADSQ) are extracellular. Residues Cys227 and Cys253 are joined by a disulfide bond. Asn232 carries an N-linked (GlcNAc...) asparagine glycan. Residues 264–284 (MFYTVPIMAFAFVCHPEVLPI) form a helical membrane-spanning segment. The Cytoplasmic segment spans residues 285 to 301 (YTELCRPSKRRMQAVAN). Residues 302–322 (VSIGAMFCMYGLTATFGYLTF) form a helical membrane-spanning segment. Topologically, residues 323 to 340 (YSSVEAEMLHMYSQHDLL) are extracellular. A helical transmembrane segment spans residues 341-361 (ILCVRLAVLLAVTLTVPVVLF). Over 362–382 (PIRRALQQLLFPSKAFSWPRH) the chain is Cytoplasmic. Residues 383-403 (VAIALILLVLVNVLVICVPTI) traverse the membrane as a helical segment. Residues 404–405 (RD) lie on the Extracellular side of the membrane. The chain crosses the membrane as a helical span at residues 406–426 (IFGVIGSTSAPSLIFILPSIF). At 427–445 (YLRIVPSEVEPLYSWPKIQ) the chain is on the cytoplasmic side. The helical transmembrane segment at 446-466 (ALCFGVLGVLFMAISLGFMFA) threads the bilayer. The Extracellular portion of the chain corresponds to 467-478 (NWATGQSHVSGH).

Belongs to the amino acid/polyamine transporter 2 family.

It is found in the cell membrane. The enzyme catalyses L-serine(out) + Na(+)(out) + H(+)(in) = L-serine(in) + Na(+)(in) + H(+)(out). The catalysed reaction is L-alanine(out) + Na(+)(out) + H(+)(in) = L-alanine(in) + Na(+)(in) + H(+)(out). It carries out the reaction glycine(out) + Na(+)(out) + H(+)(in) = glycine(in) + Na(+)(in) + H(+)(out). It catalyses the reaction L-glutamine(out) + Na(+)(out) + H(+)(in) = L-glutamine(in) + Na(+)(in) + H(+)(out). The enzyme catalyses L-asparagine(out) + Na(+)(out) + H(+)(in) = L-asparagine(in) + Na(+)(in) + H(+)(out). The catalysed reaction is L-histidine(out) + Na(+)(out) + H(+)(in) = L-histidine(in) + Na(+)(in) + H(+)(out). It carries out the reaction L-cysteine(out) + Na(+)(out) + H(+)(in) = L-cysteine(in) + Na(+)(in) + H(+)(out). Not inhibited by lithium. Partial allosteric regulation on ions sodium binding. In terms of biological role, symporter that cotransports neutral amino acids and sodium ions, coupled to an H(+) antiporter activity. Releases L-glutamine and glycine from astroglial cells and may participate in the glutamate/GABA-glutamine cycle and the NMDA receptors activation. In addition contributes significantly to L-glutamine uptake in retina, namely in ganglion and Mueller cells and, therefore participates in the retinal glutamate-glutamine cycle. The transport activity is pH sensitive, Li(+) tolerant, bidirectional and associated with large uncoupled fluxes of protons. The transport is electroneutral coupled to the cotransport of 1 Na(+) and the antiport of 1 H(+). May have particular importance for modulation of net hepatic glutamine flux. The chain is Sodium-coupled neutral amino acid transporter 5 from Bos taurus (Bovine).